A 428-amino-acid chain; its full sequence is GTPase Obg (428 aa).

In terms of domain architecture, Obg spans 1-158 (MFIDKAKVFI…LSIVLELKLL (158 aa)). The 173-residue stretch at 159 to 331 (ADVGLLGFPN…VIKEAARMLK (173 aa)) folds into the OBG-type G domain. GTP-binding positions include 165 to 172 (GFPNVGKS), 190 to 194 (FTTLK), 212 to 215 (DIPG), 282 to 285 (NKSD), and 312 to 314 (SAA). Ser-172 and Thr-192 together coordinate Mg(2+). An OCT domain is found at 345–428 (MYIPEEKRFT…LNDFEFEYLL (84 aa)).

It belongs to the TRAFAC class OBG-HflX-like GTPase superfamily. OBG GTPase family. Monomer. It depends on Mg(2+) as a cofactor.

Its subcellular location is the cytoplasm. Functionally, an essential GTPase which binds GTP, GDP and possibly (p)ppGpp with moderate affinity, with high nucleotide exchange rates and a fairly low GTP hydrolysis rate. Plays a role in control of the cell cycle, stress response, ribosome biogenesis and in those bacteria that undergo differentiation, in morphogenesis control. The protein is GTPase Obg of Clostridium botulinum (strain Eklund 17B / Type B).